We begin with the raw amino-acid sequence, 254 residues long: tRNA (guanine-N(1)-)-methyltransferase (254 aa).

S-adenosyl-L-methionine-binding positions include G117 and 136 to 141; that span reads LGDFVL.

This sequence belongs to the RNA methyltransferase TrmD family. Homodimer.

It is found in the cytoplasm. The catalysed reaction is guanosine(37) in tRNA + S-adenosyl-L-methionine = N(1)-methylguanosine(37) in tRNA + S-adenosyl-L-homocysteine + H(+). Specifically methylates guanosine-37 in various tRNAs. In Levilactobacillus brevis (strain ATCC 367 / BCRC 12310 / CIP 105137 / JCM 1170 / LMG 11437 / NCIMB 947 / NCTC 947) (Lactobacillus brevis), this protein is tRNA (guanine-N(1)-)-methyltransferase.